Consider the following 351-residue polypeptide: UDP-N-acetylglucosamine transporter slc35b4 (351 aa).

10 helical membrane passes run 6–26 (LISL…VISL), 37–57 (AILV…FVNI), 77–97 (IPLK…VLNN), 104–124 (IPIP…IVIG), 136–156 (QILS…SSMP), 173–193 (FSIG…LGLI), 209–229 (TIFY…DDIL), 252–274 (TLWV…VFIL), 282–302 (TCTL…VIYF), and 306–326 (FTSL…MYST).

This sequence belongs to the nucleotide-sugar transporter family. SLC35B subfamily.

Its subcellular location is the golgi apparatus membrane. Its function is as follows. Sugar transporter that specifically mediates the transport of UDP-N-acetylglucosamine (UDP-GlcNAc) from cytosol into Golgi. The protein is UDP-N-acetylglucosamine transporter slc35b4 (slc35b4) of Dictyostelium discoideum (Social amoeba).